A 183-amino-acid polypeptide reads, in one-letter code: Peptidyl-tRNA hydrolase (183 aa).

Y14 provides a ligand contact to tRNA. H19 functions as the Proton acceptor in the catalytic mechanism. TRNA-binding residues include Y64, N66, and N112.

It belongs to the PTH family. As to quaternary structure, monomer.

Its subcellular location is the cytoplasm. It carries out the reaction an N-acyl-L-alpha-aminoacyl-tRNA + H2O = an N-acyl-L-amino acid + a tRNA + H(+). Its function is as follows. Hydrolyzes ribosome-free peptidyl-tRNAs (with 1 or more amino acids incorporated), which drop off the ribosome during protein synthesis, or as a result of ribosome stalling. In terms of biological role, catalyzes the release of premature peptidyl moieties from peptidyl-tRNA molecules trapped in stalled 50S ribosomal subunits, and thus maintains levels of free tRNAs and 50S ribosomes. This Anaplasma phagocytophilum (strain HZ) protein is Peptidyl-tRNA hydrolase.